A 129-amino-acid chain; its full sequence is Small ribosomal subunit protein uS11 (129 aa).

It belongs to the universal ribosomal protein uS11 family. Part of the 30S ribosomal subunit. Interacts with proteins S7 and S18. Binds to IF-3.

Functionally, located on the platform of the 30S subunit, it bridges several disparate RNA helices of the 16S rRNA. Forms part of the Shine-Dalgarno cleft in the 70S ribosome. In Enterobacter sp. (strain 638), this protein is Small ribosomal subunit protein uS11.